Consider the following 352-residue polypeptide: Cobalt transport protein NhlF (352 aa).

The next 8 helical transmembrane spans lie at 23–43, 46–66, 95–115, 131–151, 206–226, 230–250, 290–310, and 323–343; these read LASV…LYLG, GNPA…VLGV, VGFF…LVVA, EIGG…VAGL, PVGL…LLTL, AATG…LFAA, VIGL…LPMF, and FEFL…GALL.

The protein belongs to the NiCoT transporter (TC 2.A.52) family.

It is found in the cell membrane. With respect to regulation, cobalt uptake is inhibited by uncouplers (CCCP and 3,5-di-tert-butyl-4-hydroxybenzylidenemalononitrile) and by the addition of excess nickel. In terms of biological role, mediates energy-dependent uptake of cobalt ions into the cell. Can also transport nickel ions, but cobalt is the preferred substrate. The chain is Cobalt transport protein NhlF (nhlF) from Rhodococcus rhodochrous.